The sequence spans 873 residues: Zinc fingers and homeoboxes protein 1 (873 aa).

The segment at 1 to 63 (MASRRKSTTP…ESVDSDNQQN (63 aa)) is disordered. Residues 18-30 (QDPDLELISDLEE) show a composition bias toward acidic residues. Thr-36 is modified (phosphothreonine). Ser-45, Ser-47, and Ser-48 each carry phosphoserine. C2H2-type zinc fingers lie at residues 70–93 (YECK…DSEH) and 102–125 (YVCV…LKYH). A Glycyl lysine isopeptide (Lys-Gly) (interchain with G-Cter in SUMO2) cross-link involves residue Lys-159. The disordered stretch occupies residues 198–247 (VHHNSAEGTSEEKENGVKASREENAENTSSSASESNTSTSTVNQVHPSPA). Position 202 is a phosphoserine (Ser-202). Over residues 207 to 221 (SEEKENGVKASREEN) the composition is skewed to basic and acidic residues. Over residues 223-238 (ENTSSSASESNTSTST) the composition is skewed to low complexity. The tract at residues 272 to 432 (NSNLVPKVLI…QTNVQKSQVP (161 aa)) is required for dimerization. Residues 272 to 564 (NSNLVPKVLI…SQPKQSWNPF (293 aa)) form a required for interaction with NFYA region. Positions 284–346 (NSIPTYNAAL…LKHGVSWTPE (63 aa)) form a DNA-binding region, homeobox 1. Positions 430–455 (QVPAAQPAAETKPATAAVPSSPSVRP) are disordered. Glycyl lysine isopeptide (Lys-Gly) (interchain with G-Cter in SUMO2) cross-links involve residues Lys-441 and Lys-485. The homeobox 2 DNA-binding region spans 464–526 (SFGIRAKKTK…YNQRNSKSNQ (63 aa)). 3 disordered regions span residues 540–568 (IDSS…PDFA), 627–664 (DEKV…TGKI), and 731–767 (SSSL…KRMN). The span at 551 to 560 (AAAASQPKQS) shows a compositional bias: low complexity. Positions 569–631 (PQKFKEKTAE…TKALKDEKVE (63 aa)) form a DNA-binding region, homeobox 3. Residue Lys-629 forms a Glycyl lysine isopeptide (Lys-Gly) (interchain with G-Cter in SUMO2) linkage. Phosphoserine is present on Ser-648. A DNA-binding region (homeobox 4) is located at residues 660-722 (GTGKICKKTP…YAWKNGNLKW (63 aa)). Residues 734–768 (LNGLSSLRKRGRGRPKGRGRGRPRGRPRGGKRMNT) form a required for nuclear localization region. A compositionally biased stretch (basic residues) spans 740 to 764 (LRKRGRGRPKGRGRGRPRGRPRGGK). Residue Ser-774 is modified to Phosphoserine. Residues 777-832 (KFKTGTAILKDYYLKHKFLNEQDLDELVNRSHMGYEQVREWFAERQRRSELGIELF) constitute a DNA-binding region (homeobox 5). The interval 829 to 873 (IELFEENEEEDEVIDDQEEDEEETDDSDTWEPPRHVKRKLSKSDD) is disordered. Residues 831 to 857 (LFEENEEEDEVIDDQEEDEEETDDSDT) show a composition bias toward acidic residues. A required for repressor activity region spans residues 831-873 (LFEENEEEDEVIDDQEEDEEETDDSDTWEPPRHVKRKLSKSDD). The span at 863 to 873 (HVKRKLSKSDD) shows a compositional bias: basic residues.

This sequence belongs to the ZHX family. As to quaternary structure, forms homodimers. Heterodimer (via HD1 domain) with ZHX2 (via HD1 domain). Also forms a heterodimer with ZHX3 which is a prerequisite for repressor activity. Interacts with ATF7IP and NFYA. Interacts (via homeobox domains) with DNMT3B (via PWWP domain). Ubiquitously expressed.

It is found in the nucleus. Its function is as follows. Acts as a transcriptional repressor. Increases DNMT3B-mediated repressive transcriptional activity when DNMT3B is tethered to DNA. May link molecule between DNMT3B and other co-repressor proteins. The chain is Zinc fingers and homeoboxes protein 1 (Zhx1) from Rattus norvegicus (Rat).